A 206-amino-acid chain; its full sequence is Imidazoleglycerol-phosphate dehydratase (206 aa).

Belongs to the imidazoleglycerol-phosphate dehydratase family.

Its subcellular location is the cytoplasm. The enzyme catalyses D-erythro-1-(imidazol-4-yl)glycerol 3-phosphate = 3-(imidazol-4-yl)-2-oxopropyl phosphate + H2O. Its pathway is amino-acid biosynthesis; L-histidine biosynthesis; L-histidine from 5-phospho-alpha-D-ribose 1-diphosphate: step 6/9. The chain is Imidazoleglycerol-phosphate dehydratase from Leptospira borgpetersenii serovar Hardjo-bovis (strain JB197).